The following is a 247-amino-acid chain: 14-3-3 protein gamma (247 aa).

It belongs to the 14-3-3 family. As to quaternary structure, homodimer, and heterodimer with other family members.

It localises to the cytoplasm. Its function is as follows. Adapter protein implicated in the regulation of a large spectrum of both general and specialized signaling pathways. Binds to a large number of partners, usually by recognition of a phosphoserine or phosphothreonine motif. Binding generally results in the modulation of the activity of the binding partner. The sequence is that of 14-3-3 protein gamma (YWHAG) from Gallus gallus (Chicken).